Here is a 96-residue protein sequence, read N- to C-terminus: Large ribosomal subunit protein bL27 (96 aa).

Residues 1 to 9 (MLNMNLQLL) constitute a propeptide that is removed on maturation.

This sequence belongs to the bacterial ribosomal protein bL27 family. The N-terminus is cleaved by ribosomal processing cysteine protease Prp.

This Clostridioides difficile (strain 630) (Peptoclostridium difficile) protein is Large ribosomal subunit protein bL27.